The following is a 517-amino-acid chain: Ubiquitin carboxyl-terminal hydrolase 30 (517 aa).

The Mitochondrial intermembrane segment spans residues 1 to 35 (MLSSRAEAAMTAADRAIQRFLRTGAAVRYKVMKNW). The chain crosses the membrane as a helical span at residues 36 to 56 (GVIGGIAAALAAGIYVIWGPI). At 57–517 (TERKKRRKGL…HQSQECKSEE (461 aa)) the chain is on the cytoplasmic side. A USP domain is found at 68-502 (PGLVNLGNTC…SAYLLFYERV (435 aa)). The Nucleophile role is filled by C77. Glycyl lysine isopeptide (Lys-Gly) (interchain with G-Cter in ubiquitin) cross-links involve residues K235 and K289. The interval 364–395 (SQHNPKLNKNPGPTLELQDGPGAPTPVLNQPG) is disordered. The Proton acceptor role is filled by H452.

Belongs to the peptidase C19 family. Post-translationally, ubiquitinated by parkin (PRKN) at Lys-235 and Lys-289, leading to its degradation. Expressed in skeletal muscle, pancreas, liver and kidney.

It localises to the mitochondrion outer membrane. The enzyme catalyses Thiol-dependent hydrolysis of ester, thioester, amide, peptide and isopeptide bonds formed by the C-terminal Gly of ubiquitin (a 76-residue protein attached to proteins as an intracellular targeting signal).. With respect to regulation, inhibited by the diterpenoid derivative 15-oxospiramilactone (S3). Deubiquitinating enzyme tethered to the mitochondrial outer membrane that acts as a key inhibitor of mitophagy by counteracting the action of parkin (PRKN): hydrolyzes ubiquitin attached by parkin on target proteins, such as RHOT1/MIRO1 and TOMM20, thereby blocking parkin's ability to drive mitophagy. Preferentially cleaves 'Lys-6'- and 'Lys-11'-linked polyubiquitin chains, 2 types of linkage that participate in mitophagic signaling. Does not cleave efficiently polyubiquitin phosphorylated at 'Ser-65'. Acts as a negative regulator of mitochondrial fusion by mediating deubiquitination of MFN1 and MFN2. The sequence is that of Ubiquitin carboxyl-terminal hydrolase 30 from Homo sapiens (Human).